The primary structure comprises 181 residues: ATP synthase subunit delta (181 aa).

It belongs to the ATPase delta chain family. As to quaternary structure, F-type ATPases have 2 components, F(1) - the catalytic core - and F(0) - the membrane proton channel. F(1) has five subunits: alpha(3), beta(3), gamma(1), delta(1), epsilon(1). F(0) has three main subunits: a(1), b(2) and c(10-14). The alpha and beta chains form an alternating ring which encloses part of the gamma chain. F(1) is attached to F(0) by a central stalk formed by the gamma and epsilon chains, while a peripheral stalk is formed by the delta and b chains.

The protein resides in the cell membrane. In terms of biological role, f(1)F(0) ATP synthase produces ATP from ADP in the presence of a proton or sodium gradient. F-type ATPases consist of two structural domains, F(1) containing the extramembraneous catalytic core and F(0) containing the membrane proton channel, linked together by a central stalk and a peripheral stalk. During catalysis, ATP synthesis in the catalytic domain of F(1) is coupled via a rotary mechanism of the central stalk subunits to proton translocation. Its function is as follows. This protein is part of the stalk that links CF(0) to CF(1). It either transmits conformational changes from CF(0) to CF(1) or is implicated in proton conduction. The protein is ATP synthase subunit delta of Bacillus pumilus (strain SAFR-032).